The chain runs to 389 residues: MTKITGIIAEFNPFHKGHEYLLNQIDGPKIVAMSGNWMQRGEPAIFDKWTRAEMALSCGADLVVELPVTVSVQAADFFASGAVDILKNLGITDLAFGSESAIDYNEIADIYETKETEMESFIKALPEQLSYPEKTQMMWQHFTGIKFDGNTPNHVLALAYAKAAAGKNINLQAIKRVGKFHSTKLTEGFASATALRQSLFSLTERKNLLTEQTHQSVSQKPAILDLSAIKNHVPSVILETYASPKTNWAAYFPLLQYKIRLDDHLENIFQVNQELSVRLKNAVKSAKNFDELVELVYTKRYTKARVRRLLTYILLNIPKEFNLPKEIHILGFSKAGQEILAQNRGKIISKIGQKPWDELTQKADEIYQLGNVDFKEQNFGRKPIIKREK.

ATP contacts are provided by residues 8-21, glycine 97, asparagine 153, and arginine 176; that span reads IAEFNPFHKGHEYL.

It belongs to the TmcAL family.

It is found in the cytoplasm. It carries out the reaction cytidine(34) in elongator tRNA(Met) + acetate + ATP = N(4)-acetylcytidine(34) in elongator tRNA(Met) + AMP + diphosphate. Catalyzes the formation of N(4)-acetylcytidine (ac(4)C) at the wobble position of elongator tRNA(Met), using acetate and ATP as substrates. First activates an acetate ion to form acetyladenylate (Ac-AMP) and then transfers the acetyl group to tRNA to form ac(4)C34. This is tRNA(Met) cytidine acetate ligase from Lactococcus lactis subsp. cremoris (strain SK11).